The following is a 421-amino-acid chain: D-amino acid dehydrogenase (421 aa).

3 to 17 (VIVLGSGVIGVASAY) contributes to the FAD binding site.

The protein belongs to the DadA oxidoreductase family. The cofactor is FAD.

It carries out the reaction a D-alpha-amino acid + A + H2O = a 2-oxocarboxylate + AH2 + NH4(+). The protein operates within amino-acid degradation; D-alanine degradation; NH(3) and pyruvate from D-alanine: step 1/1. Functionally, oxidative deamination of D-amino acids. The polypeptide is D-amino acid dehydrogenase (Acinetobacter baumannii (strain AB307-0294)).